The chain runs to 1178 residues: MSQGFRGPTGVFPHQTQSYLDPSHEHSKWRYPQPQGPESYPRSFQLQQIEFLKGRLPEAPLIGIQTQSLPPFLPGHWPRFPGPPAQDRQLEIWEFPRSVTLRNQGFHIGPPLPPPHSRGTPWRGADGLCSHFRELSISQSPEQKVLNRLEELGEGKATTAHVLARELRIPKRDINRILYSLEKKGKLHRGRGKPPLWSLVPLSQAWTQPPGVVNPDSCIQEFPRGEPGLDSEDGDPASDLEGPSEPLDMAEIKEKICDYLFNVSNSSALNLAKNIGLTKARDVTSVLIDLERQGDVYRQGATPPIWYLTDKKRERLQMKRSTHSAPAPTPTAVPEATRSPSFPACHPPPAGASSSVAASKRVENGQEPAIKHESRHEARPGPMRLRPHAYHNGPSRAGYVASENGQWATDDIPDNLNSIHTAPGEFRAIMEMPSFYSPTLPRCSPYKKLTECQLKNPVSGLLEYAQFTSQTCDFNLIEQSGPSHEPRFKFQVVINGREFPPAEAGSKKVAKQDAAVKAMAILLREAKAKDSGQPEDLSHCPMEEDSEKPAEAQAPSSSATSLFSGKSPVTTLLECMHKLGNSCEFRLLSKEGPAHDPKFQYCVAVGAQTFPPVSAPSKKVAKQMAAEEAMKALQEEAASSADDQSGGANTDSLDESMAPNKIRRIGELVRYLNTNPVGGLLEYARSHGFAAEFKLIDQSGPPHEPKFVYQAKVGGRWFPAVCAHSKKQGKQDAADAALRVLIGESEKAEQLGFAEVTPVTGASLRRTMLLLSRSPDAHPKTLPLSGSTFHDQIAMLSHRCFNALTNSFQPSLLGRKILAAIIMKRDPEDMGVVVSLGTGNRCVKGDSLSLKGETVNDCHAEIISRRGFIRFLYSELMKYNHHTAKNSIFELARGGEKLQIKKTVSFHLYISTAPCGDGALFDKSCSDRAVESTESRHYPVFENPKQGKLRTKVENGEGTIPVESSDIVPTWDGIRLGERLRTMSCSDKILRWNVLGLQGALLTHFLQPVYLKSVTLGYLFSQGHLTRAICCRVTRDGKAFEDGLRYPFIVNHPKVGRVSVYDSKRQSGKTKETSVNWCMADGYDLEILDGTRGTVDGPGKELSRVSKKNIFLQFKKLCSFRARRDLLQLSYGEAKKAARDYDLAKNYFKKSLRDMGYGNWISKPQEEKNFYLCPVPND.

The tract at residues 1–40 is disordered; that stretch reads MSQGFRGPTGVFPHQTQSYLDPSHEHSKWRYPQPQGPESY. Residues Arg30 and Arg42 each carry the asymmetric dimethylarginine modification. The Z-binding 1 domain occupies 135–201; it reads LSISQSPEQK…GKPPLWSLVP (67 aa). Residues 135–204 form an interaction with Z-DNA region; that stretch reads LSISQSPEQK…PLWSLVPLSQ (70 aa). The interval 221-244 is disordered; it reads EFPRGEPGLDSEDGDPASDLEGPS. Over residues 229–238 the composition is skewed to acidic residues; the sequence is LDSEDGDPAS. Residues Ser231 and Ser238 each carry the phosphoserine modification. In terms of domain architecture, Z-binding 2 spans 246–310; it reads PLDMAEIKEK…ATPPIWYLTD (65 aa). A disordered region spans residues 316–383; the sequence is LQMKRSTHSA…SRHEARPGPM (68 aa). Over residues 323–337 the composition is skewed to low complexity; the sequence is HSAPAPTPTAVPEAT. A compositionally biased stretch (basic and acidic residues) spans 360–379; sequence KRVENGQEPAIKHESRHEAR. Residue Lys371 forms a Glycyl lysine isopeptide (Lys-Gly) (interchain with G-Cter in SUMO); alternate linkage. Lys371 is covalently cross-linked (Glycyl lysine isopeptide (Lys-Gly) (interchain with G-Cter in SUMO1); alternate). Residue Lys371 forms a Glycyl lysine isopeptide (Lys-Gly) (interchain with G-Cter in SUMO2); alternate linkage. Ser434 carries the phosphoserine modification. Positions 456–524 constitute a DRBM 1 domain; it reads NPVSGLLEYA…AVKAMAILLR (69 aa). Over residues 527 to 550 the composition is skewed to basic and acidic residues; it reads KAKDSGQPEDLSHCPMEEDSEKPA. Positions 527–564 are disordered; sequence KAKDSGQPEDLSHCPMEEDSEKPAEAQAPSSSATSLFS. Over residues 554–564 the composition is skewed to polar residues; that stretch reads APSSSATSLFS. Phosphoserine occurs at positions 567, 582, and 589. One can recognise a DRBM 2 domain in the interval 567 to 635; it reads SPVTTLLECM…AEEAMKALQE (69 aa). The disordered stretch occupies residues 631–657; it reads KALQEEAASSADDQSGGANTDSLDESM. A compositionally biased stretch (low complexity) spans 635–648; the sequence is EEAASSADDQSGGA. The tract at residues 665–674 is N-terminal extension of DRBM 3 and constituent of a bi-partite nuclear localization signal; that stretch reads IGELVRYLNT. The region spanning 675-743 is the DRBM 3 domain; that stretch reads NPVGGLLEYA…ADAALRVLIG (69 aa). The tract at residues 744 to 750 is C-terminal extension of DRBM 3 and constituent of a bi-partite nuclear localization signal; it reads ESEKAEQ. A Phosphothreonine modification is found at Thr757. Phosphoserine is present on residues Ser763, Ser772, and Ser774. Lys824 participates in a covalent cross-link: Glycyl lysine isopeptide (Lys-Gly) (interchain with G-Cter in SUMO2). Residues 835–1170 form the A to I editase domain; sequence SLGTGNRCVK…ISKPQEEKNF (336 aa). Zn(2+) is bound at residue His859. Catalysis depends on Glu861, which acts as the Proton donor. Cys915 and Cys985 together coordinate Zn(2+).

As to quaternary structure, homodimer. Homodimerization is essential for its catalytic activity. Isoform 5 can form heterodimers with ADARB1/ADAR2. Isoform 1 and isoform 5 (via DRBM 3 domain) interact with TNPO1. Isoform 5 (via DRBM domains) interacts with XPO5. Isoform 1 and isoform 5 can interact with UPF1. Isoform 1 interacts with ILF2/NF45 and ILF3/NF90. Binding to ILF3/NF90 up-regulates ILF3-mediated gene expression. Isoform 1 and isoform 5 interact with EIF2AK2/PKR. In terms of processing, sumoylation reduces RNA-editing activity. In terms of tissue distribution, highest levels in brain and spleen. Lowest levels in liver.

Its subcellular location is the cytoplasm. It localises to the nucleus. The protein localises to the nucleolus. The enzyme catalyses adenosine in double-stranded RNA + H2O + H(+) = inosine in double-stranded RNA + NH4(+). Catalyzes the hydrolytic deamination of adenosine to inosine in double-stranded RNA (dsRNA) referred to as A-to-I RNA editing. This may affect gene expression and function in a number of ways that include mRNA translation by changing codons and hence the amino acid sequence of proteins since the translational machinery read the inosine as a guanosine; pre-mRNA splicing by altering splice site recognition sequences; RNA stability by changing sequences involved in nuclease recognition; genetic stability in the case of RNA virus genomes by changing sequences during viral RNA replication; and RNA structure-dependent activities such as microRNA production or targeting or protein-RNA interactions. Can edit both viral and cellular RNAs and can edit RNAs at multiple sites (hyper-editing) or at specific sites (site-specific editing). Its cellular RNA substrates include: bladder cancer-associated protein (BLCAP), neurotransmitter receptors for glutamate (GRIA2) and serotonin (HTR2C) and GABA receptor (GABRA3). Site-specific RNA editing of transcripts encoding these proteins results in amino acid substitutions which consequently alters their functional activities. Exhibits low-level editing at the GRIA2 Q/R site, but edits efficiently at the R/G site and HOTSPOT1. Does not affect polyomavirus replication but provides protection against virus-induced cytopathic effects. Essential for embryonic development and cell survival and plays a critical role in the maintenance of hematopoietic stem cells. The protein is Double-stranded RNA-specific adenosine deaminase (Adar) of Mus musculus (Mouse).